The following is a 139-amino-acid chain: 6,7-dimethyl-8-ribityllumazine synthase (139 aa).

5-amino-6-(D-ribitylamino)uracil-binding positions include F11, 42–44, and 66–68; these read ALE and VVI. (2S)-2-hydroxy-3-oxobutyl phosphate is bound at residue 71–72; that stretch reads ET. The active-site Proton donor is the H74. N98 is a 5-amino-6-(D-ribitylamino)uracil binding site. R112 provides a ligand contact to (2S)-2-hydroxy-3-oxobutyl phosphate.

The protein belongs to the DMRL synthase family.

It carries out the reaction (2S)-2-hydroxy-3-oxobutyl phosphate + 5-amino-6-(D-ribitylamino)uracil = 6,7-dimethyl-8-(1-D-ribityl)lumazine + phosphate + 2 H2O + H(+). It participates in cofactor biosynthesis; riboflavin biosynthesis; riboflavin from 2-hydroxy-3-oxobutyl phosphate and 5-amino-6-(D-ribitylamino)uracil: step 1/2. Catalyzes the formation of 6,7-dimethyl-8-ribityllumazine by condensation of 5-amino-6-(D-ribitylamino)uracil with 3,4-dihydroxy-2-butanone 4-phosphate. This is the penultimate step in the biosynthesis of riboflavin. The sequence is that of 6,7-dimethyl-8-ribityllumazine synthase from Zymomonas mobilis subsp. mobilis (strain ATCC 31821 / ZM4 / CP4).